A 139-amino-acid polypeptide reads, in one-letter code: Actin-depolymerizing factor 1 (139 aa).

The 135-residue stretch at 5–139 folds into the ADF-H domain; sequence SSGLAVNDEC…SLDIVRSRTN (135 aa).

The protein belongs to the actin-binding proteins ADF family. In terms of tissue distribution, expressed in pollen.

Its function is as follows. Actin-depolymerizing protein. Severs actin filaments (F-actin) and binds to actin monomers. The chain is Actin-depolymerizing factor 1 (ADF1) from Zea mays (Maize).